Reading from the N-terminus, the 846-residue chain is Aminopeptidase N (846 aa).

Residues Glu120 and 252 to 256 (GAMEN) each bind substrate. His288 is a binding site for Zn(2+). Residue Glu289 is the Proton acceptor of the active site. Residues His292 and Glu311 each contribute to the Zn(2+) site.

It belongs to the peptidase M1 family. As to quaternary structure, monomer. Requires Zn(2+) as cofactor.

It is found in the cytoplasm. It catalyses the reaction Release of an N-terminal amino acid, Xaa-|-Yaa- from a peptide, amide or arylamide. Xaa is preferably Ala, but may be most amino acids including Pro (slow action). When a terminal hydrophobic residue is followed by a prolyl residue, the two may be released as an intact Xaa-Pro dipeptide.. Its function is as follows. Aminopeptidase with broad substrate specificity to several peptides. It has more affinity for oligopeptides than for dipeptides. It plays an essential role in the metabolism, it may be involved in nitrogen supply or protein turnover. In Lactococcus lactis subsp. cremoris (strain MG1363), this protein is Aminopeptidase N (pepN).